The sequence spans 195 residues: Thioredoxin reductase-like selenoprotein T (195 aa).

Positions 1–19 (MRLLLLLLVAASAVVRSEA) are cleaved as a signal peptide. The cysteinyl-selenocysteine (Cys-Sec) cross-link spans 46–49 (CVSU). U49 is a non-standard amino acid (selenocysteine). The helical transmembrane segment at 85-103 (IASFLSVFKLVLIGLIIVG) threads the bilayer.

Belongs to the SelWTH family. Selenoprotein T subfamily. Post-translationally, may contain a selenide-sulfide bond between Cys-46 and Sec-49. This bond is speculated to serve as redox-active pair. Ubiquitous. Highly expressed in the endocrine pancreas. Expressed at low levels in the adult brain.

Its subcellular location is the endoplasmic reticulum membrane. The catalysed reaction is [thioredoxin]-dithiol + NADP(+) = [thioredoxin]-disulfide + NADPH + H(+). Functionally, selenoprotein with thioredoxin reductase-like oxidoreductase activity. Protects dopaminergic neurons against oxidative stress and cell death. Involved in ADCYAP1/PACAP-induced calcium mobilization and neuroendocrine secretion. Plays a role in fibroblast anchorage and redox regulation. In gastric smooth muscle, modulates the contraction processes through the regulation of calcium release and MYLK activation. In pancreatic islets, involved in the control of glucose homeostasis, contributes to prolonged ADCYAP1/PACAP-induced insulin secretion. The polypeptide is Thioredoxin reductase-like selenoprotein T (Mus musculus (Mouse)).